A 428-amino-acid chain; its full sequence is MESLTLQPVSQINGEVNLPGSKSVSNRALLLAALAQGTTRLTNLLDSDDIRHMLNALKQLGVNYQLSTDKTVCEVEGLGSAFNASQALELYLGNAGTAMRPLAAALCLSQGEFVLTGEPRMKERPIGHLVDALRTAGADVTYLENENYPPLKITGTGLYGGEVEIDGSISSQFLTAFLMAAPLATADTVIRIKGDLVSKPYIDITLHIMAQFGVTVENRDYQEFFIPAGQTYQGAGDFLVEGDASSASYFLAAAAIKGGEVKVTGIGKKSIQGDVQFAHALEMMGAEIEWGDNYVIARRGELKAVDMDFNHIPDAAMTIAVAALFAEGTTSIRNVYNWRVKETDRLAAMATELRKVGAKVEEGNDYITIVPPTQLQHATIDTYDDHRMAMCFSLVALSDTPVTINDPKCTSKTFPDYFDKLAELSQPA.

3 residues coordinate 3-phosphoshikimate: lysine 22, serine 23, and arginine 27. Residue lysine 22 participates in phosphoenolpyruvate binding. Glycine 96 and arginine 124 together coordinate phosphoenolpyruvate. The 3-phosphoshikimate site is built by serine 170, serine 171, glutamine 172, serine 198, aspartate 314, asparagine 337, and lysine 341. Glutamine 172 serves as a coordination point for phosphoenolpyruvate. Catalysis depends on aspartate 314, which acts as the Proton acceptor. Residues arginine 345, arginine 387, and lysine 412 each coordinate phosphoenolpyruvate.

This sequence belongs to the EPSP synthase family. In terms of assembly, monomer.

The protein localises to the cytoplasm. It carries out the reaction 3-phosphoshikimate + phosphoenolpyruvate = 5-O-(1-carboxyvinyl)-3-phosphoshikimate + phosphate. Its pathway is metabolic intermediate biosynthesis; chorismate biosynthesis; chorismate from D-erythrose 4-phosphate and phosphoenolpyruvate: step 6/7. Catalyzes the transfer of the enolpyruvyl moiety of phosphoenolpyruvate (PEP) to the 5-hydroxyl of shikimate-3-phosphate (S3P) to produce enolpyruvyl shikimate-3-phosphate and inorganic phosphate. This chain is 3-phosphoshikimate 1-carboxyvinyltransferase, found in Photobacterium profundum (strain SS9).